The chain runs to 576 residues: K(+)/H(+) antiporter NhaP2 (576 aa).

The next 13 helical transmembrane spans lie at 6–26, 34–54, 58–78, 87–107, 109–129, 163–183, 185–205, 219–239, 242–262, 271–291, 299–319, 335–355, and 359–379; these read INSFFLIGALLTAVSVLLSPM, ILLIFLAVGILAGEDGPGGIL, YSTAYLVSNLALAIILLDGGM, VALWPALSLATFGVAITTSIT, MMAAWLFDLHWLQGLLVGAIV, PMAVFLTVTLIAILANVDTEM, FSFMFISFIKQFGLGICLGLG, LADGLYSILVLSGGLIIYAAS, LGGSGILSIYLVGLFLGNKPT, VLDGMTWVSQIGMFLVLGLLL, ILIPGFALAFGMILFARPVAV, WFISWVGLRGAVPIILAVFPM, and LPGAQLYFNLAFFVVLVSLLV. The RCK C-terminal domain maps to 405–486; sequence SGVEIYPSSE…LEALSNLFSQ (82 aa).

It belongs to the monovalent cation:proton antiporter 1 (CPA1) transporter (TC 2.A.36) family. NhaP2 subfamily.

The protein localises to the cell inner membrane. The catalysed reaction is K(+)(in) + H(+)(out) = K(+)(out) + H(+)(in). K(+)/H(+) antiporter that extrudes potassium in exchange for external protons and maintains the internal concentration of potassium under toxic levels. In Shewanella baltica (strain OS195), this protein is K(+)/H(+) antiporter NhaP2.